Reading from the N-terminus, the 252-residue chain is tRNA (guanine-N(1)-)-methyltransferase (252 aa).

S-adenosyl-L-methionine is bound by residues glycine 113 and 133 to 138 (LGDYVL).

The protein belongs to the RNA methyltransferase TrmD family. Homodimer.

It is found in the cytoplasm. The enzyme catalyses guanosine(37) in tRNA + S-adenosyl-L-methionine = N(1)-methylguanosine(37) in tRNA + S-adenosyl-L-homocysteine + H(+). Its function is as follows. Specifically methylates guanosine-37 in various tRNAs. The chain is tRNA (guanine-N(1)-)-methyltransferase from Stenotrophomonas maltophilia (strain K279a).